The chain runs to 166 residues: Peptide methionine sulfoxide reductase MsrA (166 aa).

The active site involves Cys11.

Belongs to the MsrA Met sulfoxide reductase family.

The enzyme catalyses L-methionyl-[protein] + [thioredoxin]-disulfide + H2O = L-methionyl-(S)-S-oxide-[protein] + [thioredoxin]-dithiol. The catalysed reaction is [thioredoxin]-disulfide + L-methionine + H2O = L-methionine (S)-S-oxide + [thioredoxin]-dithiol. In terms of biological role, has an important function as a repair enzyme for proteins that have been inactivated by oxidation. Catalyzes the reversible oxidation-reduction of methionine sulfoxide in proteins to methionine. In Lachnoclostridium phytofermentans (strain ATCC 700394 / DSM 18823 / ISDg) (Clostridium phytofermentans), this protein is Peptide methionine sulfoxide reductase MsrA.